We begin with the raw amino-acid sequence, 552 residues long: Non-structural protein NS1 (552 aa).

Belongs to the orbivirus non-structural protein NS1 family.

In Bluetongue virus 10 (isolate USA) (BTV 10), this protein is Non-structural protein NS1 (Segment-5).